We begin with the raw amino-acid sequence, 297 residues long: Calponin-1 (297 aa).

Residues 28–131 form the Calponin-homology (CH) domain; sequence HQREQELREW…STLLALASMA (104 aa). Calponin-like repeat units lie at residues 164–189, 204–229, and 243–268; these read IGLQMGTNKFASQQGMTAYGTRRHLY, ISLQMGTNKGASQAGMTAPGTKRQIF, and VSLQMGSNKGASQRGMTVYGLPRQVY. Residue threonine 170 is modified to Phosphothreonine; by ROCK2. Serine 175 is modified (phosphoserine; by ROCK2). Phosphothreonine; by ROCK2 is present on residues threonine 180 and threonine 184. The residue at position 259 (threonine 259) is a Phosphothreonine; by ROCK2.

Belongs to the calponin family. As to quaternary structure, part of cGMP kinase signaling complex at least composed of ACTA2/alpha-actin, CNN1/calponin H1, PLN/phospholamban, PRKG1 and ITPR1. In terms of tissue distribution, smooth muscle, and tissues containing significant amounts of smooth muscle.

In terms of biological role, thin filament-associated protein that is implicated in the regulation and modulation of smooth muscle contraction. It is capable of binding to actin, calmodulin and tropomyosin. The interaction of calponin with actin inhibits the actomyosin Mg-ATPase activity. The polypeptide is Calponin-1 (CNN1) (Homo sapiens (Human)).